The sequence spans 89 residues: Small ribosomal subunit protein uS15 (89 aa).

The protein belongs to the universal ribosomal protein uS15 family. Part of the 30S ribosomal subunit. Forms a bridge to the 50S subunit in the 70S ribosome, contacting the 23S rRNA.

In terms of biological role, one of the primary rRNA binding proteins, it binds directly to 16S rRNA where it helps nucleate assembly of the platform of the 30S subunit by binding and bridging several RNA helices of the 16S rRNA. Forms an intersubunit bridge (bridge B4) with the 23S rRNA of the 50S subunit in the ribosome. In Rhodospirillum centenum (strain ATCC 51521 / SW), this protein is Small ribosomal subunit protein uS15.